The primary structure comprises 160 residues: Putative pre-16S rRNA nuclease (160 aa).

It belongs to the YqgF nuclease family.

It is found in the cytoplasm. In terms of biological role, could be a nuclease involved in processing of the 5'-end of pre-16S rRNA. The protein is Putative pre-16S rRNA nuclease of Cereibacter sphaeroides (strain KD131 / KCTC 12085) (Rhodobacter sphaeroides).